The chain runs to 155 residues: MKIEVDSFSGSKIYPGRGTLFVRGDSKIFRFQSSKSASLFQQRKNPRRISWTVLYRRHHKKGISEEAAKKRTRKTVKHQRAIVGASLELIKERRSQKPSDRKAARDSKLAKDKEAKKAAKAARKAEKAKAVASGASVVSKQQAKGSFQKVKATSR.

The disordered stretch occupies residues 87–155 (LELIKERRSQ…SFQKVKATSR (69 aa)). The segment covering 89–129 (LIKERRSQKPSDRKAARDSKLAKDKEAKKAAKAARKAEKAK) has biased composition (basic and acidic residues). A compositionally biased stretch (low complexity) spans 130–143 (AVASGASVVSKQQA).

This sequence belongs to the eukaryotic ribosomal protein eL24 family. Component of the large ribosomal subunit. Mature ribosomes consist of a small (40S) and a large (60S) subunit. The 40S subunit contains about 32 different proteins and 1 molecule of RNA (18S). The 60S subunit contains 45 different proteins and 3 molecules of RNA (25S, 5.8S and 5S).

It localises to the cytoplasm. Functionally, component of the ribosome, a large ribonucleoprotein complex responsible for the synthesis of proteins in the cell. The small ribosomal subunit (SSU) binds messenger RNAs (mRNAs) and translates the encoded message by selecting cognate aminoacyl-transfer RNA (tRNA) molecules. The large subunit (LSU) contains the ribosomal catalytic site termed the peptidyl transferase center (PTC), which catalyzes the formation of peptide bonds, thereby polymerizing the amino acids delivered by tRNAs into a polypeptide chain. The nascent polypeptides leave the ribosome through a tunnel in the LSU and interact with protein factors that function in enzymatic processing, targeting, and the membrane insertion of nascent chains at the exit of the ribosomal tunnel. This is Large ribosomal subunit protein eL24 from Candida albicans (strain SC5314 / ATCC MYA-2876) (Yeast).